A 390-amino-acid chain; its full sequence is tRNA(Met) cytidine acetate ligase (390 aa).

Residues 7-20, G101, N162, and R187 contribute to the ATP site; that span reads VVEYNPFHNGHKLH.

It belongs to the TmcAL family.

The protein resides in the cytoplasm. It carries out the reaction cytidine(34) in elongator tRNA(Met) + acetate + ATP = N(4)-acetylcytidine(34) in elongator tRNA(Met) + AMP + diphosphate. Its function is as follows. Catalyzes the formation of N(4)-acetylcytidine (ac(4)C) at the wobble position of elongator tRNA(Met), using acetate and ATP as substrates. First activates an acetate ion to form acetyladenylate (Ac-AMP) and then transfers the acetyl group to tRNA to form ac(4)C34. This is tRNA(Met) cytidine acetate ligase from Listeria monocytogenes serotype 4b (strain CLIP80459).